The sequence spans 367 residues: Polygalacturonase (367 aa).

An N-terminal signal peptide occupies residues M1–A18. A disulfide bridge connects residues C34 and C49. PbH1 repeat units lie at residues A161–S191, S192–S213, G214–S234, V243–T264, and V272–Q294. D206 functions as the Proton donor in the catalytic mechanism. C208 and C224 are oxidised to a cystine. H228 is a catalytic residue. N-linked (GlcNAc...) asparagine glycans are attached at residues N318 and N336. Disulfide bonds link C334–C339 and C358–C367.

Belongs to the glycosyl hydrolase 28 family.

Its subcellular location is the secreted. It catalyses the reaction (1,4-alpha-D-galacturonosyl)n+m + H2O = (1,4-alpha-D-galacturonosyl)n + (1,4-alpha-D-galacturonosyl)m.. This chain is Polygalacturonase (PG1), found in Penicillium digitatum (Green mold).